The chain runs to 116 residues: Spexin (116 aa).

Residues 1–26 form the signal peptide; that stretch reads MKGPSILAVAALALLLVLSVLENSSG. Residues 27–35 constitute a propeptide that is removed on maturation; sequence APQRLSEKR. Gln49 is subject to Glutamine amide. 2 consecutive propeptides follow at residues 50–116 and 74–116; these read GHRF…RFYW and PNLQ…RFYW. The span at 56–73 shows a compositional bias: basic and acidic residues; the sequence is DQSRRKELADRPPPERRN. The interval 56-75 is disordered; the sequence is DQSRRKELADRPPPERRNPN.

It belongs to the spexin family. As to expression, widely expressed; predominantly expressed in epithelial cells in the skin, respiratory, digestive, urinary and reproductive systems, retina, adrenal gland and various brain regions. In the adrenal gland, expressed in parenchymal cells of the cortex and in ganglionic cells and intermingled cortical cells of the medulla. Expressed in the type I glomic cells within the carotid body (at protein level). Widely expressed. Strongly expressed in esophagus, liver, pancreas, kidney, brain, hypothalamus, thyroid and ovary. Expressed in the zona glomerulosa (ZG) and zona fasciculata/reticularis (ZF/R) of the adrenal gland. Also expressed in stomach, lung, skeletal muscle, heart, uterus, spleen, adrenal gland and testis. Weakly expressed in small intestine, thymus, urinary bladder and adenohypophysis. In the brain, is expressed in the Barrington's nucleus, with lesser amount in the ventrolateral caudal periaqueductal gray (PAG) and in the mesopontine tegmentum.

It localises to the secreted. Its subcellular location is the extracellular space. The protein localises to the cytoplasmic vesicle. It is found in the secretory vesicle. In terms of biological role, plays a role as a central modulator of cardiovascular and renal function and nociception. Also plays a role in energy metabolism and storage. Inhibits adrenocortical cell proliferation with minor stimulation on corticosteroid release. Acts as a ligand for galanin receptors GALR2 and GALR3. Intracerebroventricular administration of the peptide induces an increase in arterial blood pressure, a decrease in both heart rate and renal excretion and delayed natriuresis. Intraventricular administration of the peptide induces antinociceptive activity. Intraperitoneal administration of the peptide induces a reduction in food consumption and body weight. Inhibits long chain fatty acid uptake into adipocytes. Also induces contraction of muscarinic-like stomach smooth muscles. Its function is as follows. Intracerebroventricular administration of the peptide induces a decrease in heart rate, but no change in arterial pressure, and an increase in urine flow rate. Intraventricular administration of the peptide induces antinociceptive activity. The sequence is that of Spexin (SPX) from Rattus norvegicus (Rat).